A 226-amino-acid polypeptide reads, in one-letter code: Phosphoglycolate phosphatase (226 aa).

The active-site Nucleophile is Asp12. Mg(2+)-binding residues include Asp12, Asp14, and Asp177.

It belongs to the HAD-like hydrolase superfamily. CbbY/CbbZ/Gph/YieH family. The cofactor is Mg(2+).

The enzyme catalyses 2-phosphoglycolate + H2O = glycolate + phosphate. Its pathway is organic acid metabolism; glycolate biosynthesis; glycolate from 2-phosphoglycolate: step 1/1. Specifically catalyzes the dephosphorylation of 2-phosphoglycolate. Is involved in the dissimilation of the intracellular 2-phosphoglycolate formed during the DNA repair of 3'-phosphoglycolate ends, a major class of DNA lesions induced by oxidative stress. The protein is Phosphoglycolate phosphatase of Colwellia psychrerythraea (strain 34H / ATCC BAA-681) (Vibrio psychroerythus).